Here is a 255-residue protein sequence, read N- to C-terminus: Putative deoxyribonuclease tatdn3-B (255 aa).

H11, H13, E106, H129, H152, and D199 together coordinate Zn(2+).

Belongs to the metallo-dependent hydrolases superfamily. TatD-type hydrolase family. Mn(2+) serves as cofactor. The cofactor is Ca(2+). Requires Mg(2+) as cofactor. Zn(2+) is required as a cofactor.

The protein localises to the nucleus. Its activity is regulated as follows. The 3'-exonuclease activity is sensitive to the metal ion present in the active site, whereas the AP endodeoxyribonuclease activity is observed in a variety of divalent metal cofactors. 3'-exoxonuclease activity is suppressed in the presence of Ca(2+), Zn(2+) and Ni(2+). Functionally, exhibits 3'-exonuclease activities and apurinic/apyrimidinic (AP) endonuclease (in vitro). Show preferential AP endonuclease activity on double-stranded DNA substrates and 3'- exonuclease activity on single-stranded DNA. The chain is Putative deoxyribonuclease tatdn3-B (tatdn3-b) from Xenopus laevis (African clawed frog).